Consider the following 1483-residue polypeptide: Neuropathy target esterase sws (1483 aa).

The Lumenal portion of the chain corresponds to 1-34 (MDVLELLRASANGCYNTLFSDAWFQYVSKQIATT). Residues 35-55 (MYWYGALLVIGVLFIAWFLYF) traverse the membrane as a helical segment. The Cytoplasmic segment spans residues 56 to 1483 (KRLARLRLRD…ENLTKTDTKN (1428 aa)). 174–301 (IFGHFEKPIF…IRVIQVIMIR (128 aa)) provides a ligand contact to a nucleoside 3',5'-cyclic phosphate. 2 disordered regions span residues 348 to 380 (ASRP…PNAN) and 404 to 440 (SSAV…GTSI). Residues 413-440 (GTRRSSTTYGPSGESPNGNANTAPGTSI) are compositionally biased toward polar residues. Phosphoserine occurs at positions 418 and 424. Residues 456–585 (ELGL…VVRR) and 574–701 (IVLD…LSHR) contribute to the a nucleoside 3',5'-cyclic phosphate site. The PNPLA domain occupies 927 to 1093 (LVLGGGGARG…VNNLPGHLWR (167 aa)). Residues 931–936 (GGGARG) carry the GXGXXG motif. The GXSXG motif lies at 958-962 (GVSIG). Ser-960 functions as the Nucleophile in the catalytic mechanism. Catalysis depends on Asp-1080, which acts as the Proton acceptor. The DGA/G motif lies at 1080 to 1082 (DGG). A Phosphoserine modification is found at Ser-1174. The segment at 1349 to 1483 (DKATQSTPPT…ENLTKTDTKN (135 aa)) is disordered. A compositionally biased stretch (polar residues) spans 1351-1373 (ATQSTPPTPNKQHALSPTSSQTN). Basic and acidic residues predominate over residues 1382-1396 (KPKEKQPSYDKLDRE). Positions 1410–1419 (ERSSMQQRDS) are enriched in low complexity. A compositionally biased stretch (basic and acidic residues) spans 1445–1458 (LNKPEQQPEQKPVP). Low complexity predominate over residues 1465–1474 (QKQQDQQQQE).

Belongs to the NTE family. In terms of assembly, interacts with Pka-C3; interaction inhibits the catalytic function of Pka-C3 and the esterase activity of sws.

The protein localises to the endoplasmic reticulum membrane. It carries out the reaction a 1-acyl-sn-glycero-3-phosphocholine + H2O = sn-glycerol 3-phosphocholine + a fatty acid + H(+). Its function is as follows. Phospholipase B that deacylates intracellular phosphatidylcholine (PtdCho), generating glycerophosphocholine (GroPtdCho). This deacylation occurs at both sn-2 and sn-1 positions of PtdCho. Its specific chemical modification by certain organophosphorus (OP) compounds leads to distal axonopathy. Plays a role in the signaling mechanism between neurons and glia that regulates glia wrapping during development of the adult brain. Essential for membrane lipid homeostasis and cell survival in both neurons and glia of the adult brain. The protein is Neuropathy target esterase sws of Drosophila virilis (Fruit fly).